A 106-amino-acid polypeptide reads, in one-letter code: Nucleoid-associated protein XOO1065 (106 aa).

Over residues 80 to 89 (KIDAESKDRM) the composition is skewed to basic and acidic residues. Residues 80 to 106 (KIDAESKDRMGSATAGMQLPPGMKLPF) are disordered.

This sequence belongs to the YbaB/EbfC family. As to quaternary structure, homodimer.

Its subcellular location is the cytoplasm. It is found in the nucleoid. Functionally, binds to DNA and alters its conformation. May be involved in regulation of gene expression, nucleoid organization and DNA protection. The chain is Nucleoid-associated protein XOO1065 from Xanthomonas oryzae pv. oryzae (strain KACC10331 / KXO85).